Here is a 481-residue protein sequence, read N- to C-terminus: Aspartyl/glutamyl-tRNA(Asn/Gln) amidotransferase subunit B (481 aa).

It belongs to the GatB/GatE family. GatB subfamily. Heterotrimer of A, B and C subunits.

It carries out the reaction L-glutamyl-tRNA(Gln) + L-glutamine + ATP + H2O = L-glutaminyl-tRNA(Gln) + L-glutamate + ADP + phosphate + H(+). It catalyses the reaction L-aspartyl-tRNA(Asn) + L-glutamine + ATP + H2O = L-asparaginyl-tRNA(Asn) + L-glutamate + ADP + phosphate + 2 H(+). Its function is as follows. Allows the formation of correctly charged Asn-tRNA(Asn) or Gln-tRNA(Gln) through the transamidation of misacylated Asp-tRNA(Asn) or Glu-tRNA(Gln) in organisms which lack either or both of asparaginyl-tRNA or glutaminyl-tRNA synthetases. The reaction takes place in the presence of glutamine and ATP through an activated phospho-Asp-tRNA(Asn) or phospho-Glu-tRNA(Gln). This chain is Aspartyl/glutamyl-tRNA(Asn/Gln) amidotransferase subunit B, found in Ehrlichia ruminantium (strain Gardel).